A 112-amino-acid chain; its full sequence is Protein Churchill (112 aa).

Positions 2, 5, 30, 33, 59, 61, 64, 66, 71, 88, and 91 each coordinate Zn(2+).

This sequence belongs to the Churchill family.

In terms of biological role, transcriptional activator that mediates FGF signaling during neural development. Plays a role in the regulation of cell movement. Does not bind DNA by itself. This Bos taurus (Bovine) protein is Protein Churchill (CHURC1).